The chain runs to 298 residues: uncharacterized protein (298 aa).

The 61-residue stretch at 1 to 61 (MDIFISKKMR…TRKDNNISLN (61 aa)) folds into the HTH lysR-type domain. Residues 21 to 40 (IARAAEKIHMTASPFGKSIA) constitute a DNA-binding region (H-T-H motif).

This sequence belongs to the LysR transcriptional regulatory family.

This is an uncharacterized protein from Escherichia coli (strain K12).